Consider the following 92-residue polypeptide: Small ribosomal subunit protein uS19 (92 aa).

It belongs to the universal ribosomal protein uS19 family.

Functionally, protein S19 forms a complex with S13 that binds strongly to the 16S ribosomal RNA. In Phenylobacterium zucineum (strain HLK1), this protein is Small ribosomal subunit protein uS19.